We begin with the raw amino-acid sequence, 269 residues long: Large ribosomal subunit protein uL3m (269 aa).

A mitochondrion-targeting transit peptide spans 1-19; that stretch reads MSKFLQGSIFSISKLHVRY.

This sequence belongs to the universal ribosomal protein uL3 family. In terms of assembly, component of the mitochondrial large ribosomal subunit (mt-LSU). Mature yeast 74S mitochondrial ribosomes consist of a small (37S) and a large (54S) subunit. The 37S small subunit contains a 15S ribosomal RNA (15S mt-rRNA) and 34 different proteins. The 54S large subunit contains a 21S rRNA (21S mt-rRNA) and 46 different proteins.

The protein localises to the mitochondrion. In terms of biological role, component of the mitochondrial ribosome (mitoribosome), a dedicated translation machinery responsible for the synthesis of mitochondrial genome-encoded proteins, including at least some of the essential transmembrane subunits of the mitochondrial respiratory chain. The mitoribosomes are attached to the mitochondrial inner membrane and translation products are cotranslationally integrated into the membrane. This is Large ribosomal subunit protein uL3m (MRPL9) from Saccharomyces cerevisiae (strain ATCC 204508 / S288c) (Baker's yeast).